A 503-amino-acid polypeptide reads, in one-letter code: Maturase K (503 aa).

This sequence belongs to the intron maturase 2 family. MatK subfamily.

The protein resides in the plastid. It localises to the chloroplast. In terms of biological role, usually encoded in the trnK tRNA gene intron. Probably assists in splicing its own and other chloroplast group II introns. This chain is Maturase K, found in Rhamnus cathartica (Common buckthorn).